We begin with the raw amino-acid sequence, 711 residues long: Ent-copalyl diphosphate synthase 1 (711 aa).

Substrate is bound at residue K145. Positions 277 and 279 each coordinate Mg(2+). Positions 277 to 280 (DIDD) match the DXDD motif motif. K364 serves as a coordination point for substrate.

This sequence belongs to the terpene synthase family. Tpsc subfamily. It depends on Mg(2+) as a cofactor.

It carries out the reaction (2E,6E,10E)-geranylgeranyl diphosphate = ent-copalyl diphosphate. It participates in secondary metabolite biosynthesis; terpenoid biosynthesis. Functionally, involved in the biosynthesis of ent-kaurene diterpenoids natural products such as oridonin, miltiradiene, eriocalyxin B and nezukol, known to exhibit antitumor, anti-inflammatory and antibacterial activities. Catalyzes the conversion of (2E,6E,10E)-geranylgeranyl diphosphate (GGPP) to ent-copalyl diphosphate (ent-CPP). The chain is Ent-copalyl diphosphate synthase 1 from Isodon japonicus (Scutellaria japonica).